Consider the following 310-residue polypeptide: Transcription factor MYB53 (310 aa).

2 consecutive HTH myb-type domains span residues 9-61 (ETGL…TNYL) and 62-116 (RPDI…KKKL). 2 DNA-binding regions (H-T-H motif) span residues 37–61 (WSAL…TNYL) and 89–112 (WSMI…NTHL).

In terms of assembly, interacts with FBX5. In terms of tissue distribution, highly expressed in roots and at lower levels in leaves, stems and flowers.

Its subcellular location is the nucleus. Its function is as follows. Probable transcription factor. In Arabidopsis thaliana (Mouse-ear cress), this protein is Transcription factor MYB53.